The chain runs to 308 residues: tRNA dimethylallyltransferase (308 aa).

Position 9 to 16 (9 to 16) interacts with ATP; the sequence is GPTAAGKT. 11-16 serves as a coordination point for substrate; it reads TAAGKT. Interaction with substrate tRNA regions lie at residues 34–37 and 158–162; these read DSMQ and QRLLR.

This sequence belongs to the IPP transferase family. As to quaternary structure, monomer. It depends on Mg(2+) as a cofactor.

It carries out the reaction adenosine(37) in tRNA + dimethylallyl diphosphate = N(6)-dimethylallyladenosine(37) in tRNA + diphosphate. Functionally, catalyzes the transfer of a dimethylallyl group onto the adenine at position 37 in tRNAs that read codons beginning with uridine, leading to the formation of N6-(dimethylallyl)adenosine (i(6)A). The chain is tRNA dimethylallyltransferase from Maricaulis maris (strain MCS10) (Caulobacter maris).